A 243-amino-acid chain; its full sequence is Ubiquinone/menaquinone biosynthesis C-methyltransferase UbiE (243 aa).

Residues Thr-69, Asp-90, and 116 to 117 contribute to the S-adenosyl-L-methionine site; that span reads DA.

It belongs to the class I-like SAM-binding methyltransferase superfamily. MenG/UbiE family.

The enzyme catalyses a 2-demethylmenaquinol + S-adenosyl-L-methionine = a menaquinol + S-adenosyl-L-homocysteine + H(+). It carries out the reaction a 2-methoxy-6-(all-trans-polyprenyl)benzene-1,4-diol + S-adenosyl-L-methionine = a 5-methoxy-2-methyl-3-(all-trans-polyprenyl)benzene-1,4-diol + S-adenosyl-L-homocysteine + H(+). It participates in quinol/quinone metabolism; menaquinone biosynthesis; menaquinol from 1,4-dihydroxy-2-naphthoate: step 2/2. The protein operates within cofactor biosynthesis; ubiquinone biosynthesis. Its function is as follows. Methyltransferase required for the conversion of demethylmenaquinol (DMKH2) to menaquinol (MKH2) and the conversion of 2-polyprenyl-6-methoxy-1,4-benzoquinol (DDMQH2) to 2-polyprenyl-3-methyl-6-methoxy-1,4-benzoquinol (DMQH2). The polypeptide is Ubiquinone/menaquinone biosynthesis C-methyltransferase UbiE (Burkholderia cenocepacia (strain ATCC BAA-245 / DSM 16553 / LMG 16656 / NCTC 13227 / J2315 / CF5610) (Burkholderia cepacia (strain J2315))).